Reading from the N-terminus, the 490-residue chain is N-succinylglutamate 5-semialdehyde dehydrogenase (490 aa).

220–225 (GSANTG) contributes to the NAD(+) binding site. Residues E243 and C277 contribute to the active site.

This sequence belongs to the aldehyde dehydrogenase family. AstD subfamily.

It catalyses the reaction N-succinyl-L-glutamate 5-semialdehyde + NAD(+) + H2O = N-succinyl-L-glutamate + NADH + 2 H(+). Its pathway is amino-acid degradation; L-arginine degradation via AST pathway; L-glutamate and succinate from L-arginine: step 4/5. Functionally, catalyzes the NAD-dependent reduction of succinylglutamate semialdehyde into succinylglutamate. This Shigella dysenteriae serotype 1 (strain Sd197) protein is N-succinylglutamate 5-semialdehyde dehydrogenase.